The following is a 728-amino-acid chain: Beta-porphyranase A (728 aa).

An N-terminal signal peptide occupies residues Met1–Cys22. The substrate site is built by His53, Lys76, Trp78, Lys87, His114, and Asn151. Residue Glu152 is the Proton donor of the active site. 4 residues coordinate substrate: His235, Glu279, Ser326, and Trp331. The active-site Nucleophile is Glu279. A CBM-cenC domain is found at Thr599 to Val701.

Belongs to the glycosyl hydrolase 86 family.

The enzyme catalyses Hydrolysis of beta-D-galactopyranose-(1-&gt;4)-alpha-L-galactopyranose-6-sulfate linkages in porphyran.. Cleaves the sulfated polysaccharide porphyran at the (1-&gt;4) linkages between beta-D-galactopyranose and alpha-L-galactopyranose-6-sulfate, forming mostly the disaccharide alpha-L-galactopyranose-6-sulfate-(1-&gt;3)-beta-D-galactose. Some longer oligosaccharides of even number of residues are also observed. Inactive on the non-sulfated agarose portion of the porphyran backbone. Can also use methylated galactoses. The chain is Beta-porphyranase A from Phocaeicola plebeius (strain DSM 17135 / JCM 12973 / CCUG 54634 / M2) (Bacteroides plebeius).